A 423-amino-acid polypeptide reads, in one-letter code: COP9 signalosome complex subunit 3 (423 aa).

Alanine 2 carries the post-translational modification N-acetylalanine. Residues 197 to 365 enclose the PCI domain; the sequence is NFERALYFYE…GMVSFHDNPE (169 aa). The interval 402-423 is disordered; sequence QFVQKSMGSQEDDSGNKPSSYS. Serine 407, serine 410, and serine 423 each carry phosphoserine.

The protein belongs to the CSN3 family. Component of the CSN complex, composed of COPS1/GPS1, COPS2, COPS3, COPS4, COPS5, COPS6, COPS7 (COPS7A or COPS7B), COPS8 and COPS9 isoform 1. In the complex, it probably interacts directly with COPS1, COPS4, COPS8 and COPS9 isoform 1. Interacts with CK2 and PKD. Interacts with the translation initiation factor EIF3S6 and IKBKG. Interacts with ERCC6. Widely expressed. Expressed at high level in heart and skeletal muscle.

Its subcellular location is the cytoplasm. The protein resides in the nucleus. Component of the COP9 signalosome complex (CSN), a complex involved in various cellular and developmental processes. The CSN complex is an essential regulator of the ubiquitin (Ubl) conjugation pathway by mediating the deneddylation of the cullin subunits of SCF-type E3 ligase complexes, leading to decrease the Ubl ligase activity of SCF-type complexes such as SCF, CSA or DDB2. The complex is also involved in phosphorylation of p53/TP53, c-jun/JUN, IkappaBalpha/NFKBIA, ITPK1 and IRF8/ICSBP, possibly via its association with CK2 and PKD kinases. CSN-dependent phosphorylation of TP53 and JUN promotes and protects degradation by the Ubl system, respectively. This is COP9 signalosome complex subunit 3 (COPS3) from Homo sapiens (Human).